Reading from the N-terminus, the 429-residue chain is Serine hydroxymethyltransferase (429 aa).

120–122 (GHI) is a binding site for (6S)-5,6,7,8-tetrahydrofolate. Lysine 226 bears the N6-(pyridoxal phosphate)lysine mark.

This sequence belongs to the SHMT family. In terms of assembly, homodimer. It depends on pyridoxal 5'-phosphate as a cofactor.

It is found in the cytoplasm. The catalysed reaction is 5,10-methylenetetrahydromethanopterin + glycine + H2O = 5,6,7,8-tetrahydromethanopterin + L-serine. The enzyme catalyses L-allo-threonine = acetaldehyde + glycine. The protein operates within amino-acid biosynthesis; glycine biosynthesis; glycine from L-serine: step 1/1. Catalyzes the reversible interconversion of serine and glycine with tetrahydromethanopterin (H4MPT) serving as the one-carbon carrier. The use of tetrahydrofolate (THF or H4PteGlu) as the pteridine substrate is 450-fold less efficient than that of H4MPT. Also exhibits a pteridine-independent aldolase activity toward beta-hydroxyamino acids, producing glycine and aldehydes, via a retro-aldol mechanism. Thus, is able to catalyze the cleavage of L-allo-threonine and L-threo-beta-phenylserine. The sequence is that of Serine hydroxymethyltransferase from Methanocaldococcus jannaschii (strain ATCC 43067 / DSM 2661 / JAL-1 / JCM 10045 / NBRC 100440) (Methanococcus jannaschii).